Consider the following 117-residue polypeptide: Resistin-like gamma (117 aa).

An N-terminal signal peptide occupies residues 1–29 (MLTFNKMKTTTCSLLICISLLQLMVPVNT). Intrachain disulfides connect Cys-61–Cys-114, Cys-73–Cys-113, Cys-82–Cys-99, Cys-84–Cys-101, and Cys-88–Cys-103.

The protein belongs to the resistin/FIZZ family. As to quaternary structure, homodimer. Heterodimer with RETNLB. As to expression, expressed in colon, lung, spleen, pancreas, ileum and bone marrow (at protein level). In colon, found throughout the crypt and surface epithelium, including goblet cells (at protein level). Highest expression is observed in bone marrow, spleen and lung, with lower levels in other tissues. Detected at low levels in granulocytes, but not found in monocytes or lymphocytes. Has very weak expression in white adipose tissue.

The protein localises to the secreted. In terms of biological role, probable hormone. Promotes chemotaxis in myeloid cells. In Mus musculus (Mouse), this protein is Resistin-like gamma.